We begin with the raw amino-acid sequence, 1202 residues long: Inner capsid protein VP3 (1202 aa).

Disordered stretches follow at residues 1–45 (MRPI…SGKI) and 73–99 (YTSKDSVQHGGSSITYTSNTTGNPRVT). A compositionally biased stretch (basic and acidic residues) spans 10-21 (NQERTTTKHQET). The segment covering 27-45 (NEQTTSDQRFTRSSNSGKI) has biased composition (polar residues).

Belongs to the turreted BTV-fold inner capsid family. As to quaternary structure, homodecamer; each decamer is made up of two conformers of VP2, called VP2A and VP2B. 12 homodecamers assemble to form an icosahedral capsid.

Its subcellular location is the virion. Inner capsid protein that self-assembles to form an icosahedral capsid with a T=2 symmetry, which consists of 120 copies of VP2, with channels at each of its five-fold vertices. This capsid constitutes the innermost concentric layer of the viral mature particle. The protein is Inner capsid protein VP3 (S3) of Aedes pseudoscutellaris reovirus (isolate France) (ApRV).